Consider the following 372-residue polypeptide: Protein zntB (372 aa).

A run of 3 helical transmembrane segments spans residues 15-35 (LIMC…VIFI), 42-62 (LLGH…FMDL), and 70-90 (IGFY…AVIL). The tract at residues 99 to 166 (ESGDSNHAHS…IAKSKNKKKS (68 aa)) is disordered. Residues 114–124 (IEKHSSEKKEV) show a composition bias toward basic and acidic residues. The stretch at 133–167 (NGKDKKQKQQKQKQQKQQQQQKQNIAKSKNKKKSK) forms a coiled coil. The segment covering 137–146 (KKQKQQKQKQ) has biased composition (basic residues). Residues 147–159 (QKQQQQQKQNIAK) show a composition bias toward low complexity. 5 consecutive transmembrane segments (helical) span residues 170–192 (YLNS…EGVA), 207–229 (LMLA…IFSA), 237–257 (FKYC…FGLI), 271–291 (LAAV…PAAF), and 301–321 (FSNI…HSML). The disordered stretch occupies residues 328 to 372 (AGDGGHGHSHGGHGHSHGHGHSHGGHSHDSQHVESPQSSSFNAFA). A compositionally biased stretch (basic residues) spans 334-352 (GHSHGGHGHSHGHGHSHGG). Residues 360–372 (VESPQSSSFNAFA) show a composition bias toward polar residues.

This sequence belongs to the ZIP transporter (TC 2.A.5) family. ZupT subfamily.

The protein resides in the membrane. Functionally, may transport divalent cations. May participate, with dstA, in the regulation of the differentiation of stalk cells during development. This Dictyostelium discoideum (Social amoeba) protein is Protein zntB (zntB).